A 108-amino-acid polypeptide reads, in one-letter code: Ribonuclease P protein component 4 (108 aa).

Residues Cys-60, Cys-63, Cys-86, and Cys-89 each contribute to the Zn(2+) site.

It belongs to the eukaryotic/archaeal RNase P protein component 4 family. Consists of a catalytic RNA component and at least 4-5 protein subunits. Zn(2+) is required as a cofactor.

The protein localises to the cytoplasm. It carries out the reaction Endonucleolytic cleavage of RNA, removing 5'-extranucleotides from tRNA precursor.. Its function is as follows. Part of ribonuclease P, a protein complex that generates mature tRNA molecules by cleaving their 5'-ends. In Sulfurisphaera tokodaii (strain DSM 16993 / JCM 10545 / NBRC 100140 / 7) (Sulfolobus tokodaii), this protein is Ribonuclease P protein component 4.